The chain runs to 539 residues: Probable malate:quinone oxidoreductase 3 (539 aa).

The segment at 516–539 (LEPPVSPQRPESIRPADSQGVASR) is disordered.

The protein belongs to the MQO family. The cofactor is FAD.

It carries out the reaction (S)-malate + a quinone = a quinol + oxaloacetate. The protein operates within carbohydrate metabolism; tricarboxylic acid cycle; oxaloacetate from (S)-malate (quinone route): step 1/1. The sequence is that of Probable malate:quinone oxidoreductase 3 from Pseudomonas putida (strain ATCC 47054 / DSM 6125 / CFBP 8728 / NCIMB 11950 / KT2440).